The primary structure comprises 325 residues: Small ribosomal subunit protein RACK1 (325 aa).

WD repeat units follow at residues 5–48, 58–99, 100–141, 143–186, 187–227, 228–268, and 269–320; these read QMKL…WDVD, IGRP…WDLN, QGVS…WNTL, QCKY…WNLG, NCRL…LWDL, NEGK…WDLE, and DKKE…YQVS.

Belongs to the WD repeat G protein beta family. Ribosomal protein RACK1 subfamily.

Its function is as follows. Required for the expression of antimicrobial peptide nlp-29 in response to fungal infection or physical injury. This is Small ribosomal subunit protein RACK1 (rack-1) from Caenorhabditis elegans.